The sequence spans 314 residues: Mitochondrial 2-oxoglutarate/malate carrier protein (314 aa).

A2 is subject to N-acetylalanine. Residue S6 is modified to Phosphoserine. Solcar repeat units lie at residues 23-108, 117-208, and 217-306; these read VKFL…LFER, PGFL…SKQF, and DNIL…MNKA. The chain crosses the membrane as a helical span at residues 24–42; it reads KFLFGGLAGMGATVFVQPL. An N6-succinyllysine modification is found at K57. K73 carries the N6-acetyllysine modification. A helical membrane pass occupies residues 83–101; that stretch reads GLSAGLLRQATYTTTRLGI. Y102 is subject to Phosphotyrosine. The next 3 helical transmembrane spans lie at 119–140, 183–202, and 222–240; these read FLLKALIGMTAGATGAFVGTPA, GCIPTMARAVVVNAAQLASY, and HFCASMISGLVTTAASMPV. At K256 the chain carries N6-acetyllysine. Residues 281-300 traverse the membrane as a helical segment; the sequence is GFTPYYARLGPHTVLTFIFL.

Belongs to the mitochondrial carrier (TC 2.A.29) family. Interacts with SMIM26.

Its subcellular location is the mitochondrion inner membrane. The enzyme catalyses (S)-malate(in) + 2-oxoglutarate(out) = (S)-malate(out) + 2-oxoglutarate(in). It carries out the reaction malonate(in) + 2-oxoglutarate(out) = malonate(out) + 2-oxoglutarate(in). It catalyses the reaction succinate(in) + 2-oxoglutarate(out) = succinate(out) + 2-oxoglutarate(in). The catalysed reaction is maleate(in) + 2-oxoglutarate(out) = maleate(out) + 2-oxoglutarate(in). The enzyme catalyses oxaloacetate(in) + 2-oxoglutarate(out) = oxaloacetate(out) + 2-oxoglutarate(in). Catalyzes the transport of 2-oxoglutarate (alpha-oxoglutarate) across the inner mitochondrial membrane in an electroneutral exchange for malate. Can also exchange 2-oxoglutarate for other dicarboxylic acids such as malonate, succinate, maleate and oxaloacetate, although with lower affinity. Contributes to several metabolic processes, including the malate-aspartate shuttle, the oxoglutarate/isocitrate shuttle, in gluconeogenesis from lactate, and in nitrogen metabolism. Maintains mitochondrial fusion and fission events, and the organization and morphology of cristae. Involved in the regulation of apoptosis. Helps protect from cytotoxic-induced apoptosis by modulating glutathione levels in mitochondria. The polypeptide is Mitochondrial 2-oxoglutarate/malate carrier protein (Slc25a11) (Mus musculus (Mouse)).